The following is a 340-amino-acid chain: Putative inactive cytochrome P450 family member 4Z2 (340 aa).

At 1–9 the chain is on the cytoplasmic side; sequence MEPSWLQEL. A helical; Signal-anchor for type II membrane protein transmembrane segment spans residues 10–30; it reads MAHPFLLLILLCMSLLLFQVI. The Lumenal portion of the chain corresponds to 31-340; the sequence is RLYQRRRWTI…AKYPEHQQRC (310 aa).

It belongs to the cytochrome P450 family. The cofactor is heme. Detected at low levels in mammary gland and mammary carcinoma.

It localises to the membrane. This is Putative inactive cytochrome P450 family member 4Z2 (CYP4Z2P) from Homo sapiens (Human).